The following is a 501-amino-acid chain: Ammonium transporter 1 member 1 (501 aa).

10 helical membrane passes run 8–28, 46–66, 81–101, 128–148, 152–172, 199–219, 243–263, 333–353, 366–386, and 419–439; these read LAVLLGPNATAAANYICGQLG, LLFSAYLVFSMQLGFAMLCAG, VLDAAAGGLFYYLFGYAFAFG, FLYQWAFAIAAAGITSGSIAE, FVAYLIYSSFLTGFVYPVVSH, FAGSGVVHMVGGIAGLWGALI, LVVLGTFLLWFGWYGFNPGSF, VVEPWAAIICGFVAALVLLGC, LEAAQLHGGCGAWGLIFTALF, and LIQIIVITGWVSATMGTLFFI. Threonine 460 is modified (phosphothreonine). 4 positions are modified to phosphoserine: serine 475, serine 488, serine 490, and serine 492.

It belongs to the ammonia transporter channel (TC 1.A.11.2) family. As to quaternary structure, self interacts. Interacts with the receptor protein kinases CEPR2, At2g28990 and PAM74. Highly expressed in roots. Expressed in root tips, root hairs, root epidermis, rhizodermis, cortex and pericycle. Expressed in leaves epidermal and mesophyll cells.

It localises to the cell membrane. High affinity ammonium transporter probably involved in ammonium uptake from the soil, long-distance transport to the shoots and re-uptake of apoplastic ammonium that derives from photorespiration in shoots. Contributes with AMT1-3 to the overall ammonium uptake capacity in roots under nitrogen-deficiency conditions. The chain is Ammonium transporter 1 member 1 (AMT1-1) from Arabidopsis thaliana (Mouse-ear cress).